The chain runs to 592 residues: V-type ATP synthase alpha chain (592 aa).

An ATP-binding site is contributed by 233-240 (GPFGSGKT).

This sequence belongs to the ATPase alpha/beta chains family.

It catalyses the reaction ATP + H2O + 4 H(+)(in) = ADP + phosphate + 5 H(+)(out). Produces ATP from ADP in the presence of a proton gradient across the membrane. The V-type alpha chain is a catalytic subunit. This Clostridium botulinum (strain Loch Maree / Type A3) protein is V-type ATP synthase alpha chain.